The primary structure comprises 227 residues: Germin-like protein subfamily 1 member 6 (227 aa).

An N-terminal signal peptide occupies residues M1 to C25. The cysteines at positions 35 and 51 are disulfide-linked. A Cupin type-1 domain is found at S65–R216. N72 and N80 each carry an N-linked (GlcNAc...) asparagine glycan. Positions 113, 115, 120, and 162 each coordinate Mn(2+).

Belongs to the germin family. In terms of assembly, oligomer (believed to be a pentamer but probably hexamer).

The protein localises to the secreted. The protein resides in the extracellular space. It localises to the apoplast. Functionally, may play a role in plant defense. Probably has no oxalate oxidase activity even if the active site is conserved. The chain is Germin-like protein subfamily 1 member 6 from Arabidopsis thaliana (Mouse-ear cress).